Here is a 955-residue protein sequence, read N- to C-terminus: Iron-responsive element-binding protein 2 (955 aa).

C504, C570, and C573 together coordinate [4Fe-4S] cluster.

Belongs to the aconitase/IPM isomerase family. [4Fe-4S] cluster is required as a cofactor. Post-translationally, ubiquitinated and degraded by the proteasome in presence of high level of iron and oxygen.

The protein localises to the cytoplasm. RNA-binding protein that binds to iron-responsive elements (IRES), which are stem-loop structures found in the 5'-UTR of ferritin, and delta aminolevulinic acid synthase mRNAs, and in the 3'-UTR of transferrin receptor mRNA. Binding to the IRE element in ferritin results in the repression of its mRNA translation. Binding of the protein to the transferrin receptor mRNA inhibits the degradation of this otherwise rapidly degraded mRNA. This Xenopus laevis (African clawed frog) protein is Iron-responsive element-binding protein 2 (ireb2).